The following is a 151-amino-acid chain: Small ribosomal subunit protein uS15y (151 aa).

It belongs to the universal ribosomal protein uS15 family.

The sequence is that of Small ribosomal subunit protein uS15y (RPS13B) from Arabidopsis thaliana (Mouse-ear cress).